The primary structure comprises 73 residues: Cytochrome b559 subunit alpha (73 aa).

Residues 21-35 (IIHSITVPSLFIAGW) form a helical membrane-spanning segment. Position 23 (H23) interacts with heme.

It belongs to the PsbE/PsbF family. Heterodimer of an alpha subunit and a beta subunit. PSII is composed of 1 copy each of membrane proteins PsbA, PsbB, PsbC, PsbD, PsbE, PsbF, PsbH, PsbI, PsbJ, PsbK, PsbL, PsbM, PsbT, PsbY, PsbZ, Psb30/Ycf12, at least 3 peripheral proteins of the oxygen-evolving complex and a large number of cofactors. It forms dimeric complexes. It depends on heme b as a cofactor.

It is found in the plastid. The protein localises to the chloroplast thylakoid membrane. In terms of biological role, this b-type cytochrome is tightly associated with the reaction center of photosystem II (PSII). PSII is a light-driven water:plastoquinone oxidoreductase that uses light energy to abstract electrons from H(2)O, generating O(2) and a proton gradient subsequently used for ATP formation. It consists of a core antenna complex that captures photons, and an electron transfer chain that converts photonic excitation into a charge separation. The polypeptide is Cytochrome b559 subunit alpha (Bigelowiella natans (Pedinomonas minutissima)).